Consider the following 192-residue polypeptide: Molybdenum cofactor guanylyltransferase (192 aa).

GTP is bound by residues 10 to 12, Lys-23, Asn-51, Asp-69, and Asp-99; that span reads LAG. Asp-99 contacts Mg(2+).

It belongs to the MobA family. Monomer. It depends on Mg(2+) as a cofactor.

It is found in the cytoplasm. The enzyme catalyses Mo-molybdopterin + GTP + H(+) = Mo-molybdopterin guanine dinucleotide + diphosphate. Transfers a GMP moiety from GTP to Mo-molybdopterin (Mo-MPT) cofactor (Moco or molybdenum cofactor) to form Mo-molybdopterin guanine dinucleotide (Mo-MGD) cofactor. This is Molybdenum cofactor guanylyltransferase from Haemophilus influenzae (strain ATCC 51907 / DSM 11121 / KW20 / Rd).